The sequence spans 418 residues: Lysophosphatidic acid phosphatase type 6 (418 aa).

Residues 1–25 constitute a mitochondrion transit peptide; that stretch reads MRVWVPVGVLTSLAYCFHQRRVALA. The tract at residues 51–161 is substrate binding; it reads RHGARSPLKP…VFIRSTNMFR (111 aa). His52 serves as the catalytic Nucleophile. The active-site Proton donor is the Asp327.

Belongs to the histidine acid phosphatase family. As to quaternary structure, monomer.

It localises to the mitochondrion. It catalyses the reaction a phosphate monoester + H2O = an alcohol + phosphate. The catalysed reaction is 1-(9Z-octadecenoyl)-sn-glycero-3-phosphate + H2O = 1-(9Z-octadecenoyl)-sn-glycerol + phosphate. Functionally, hydrolyzes lysophosphatidic acid (LPA) containing a medium length fatty acid chain to the corresponding monoacylglycerol. Has highest activity with lysophosphatidic acid containing myristate (C14:0), monounsaturated oleate (C18:1) or palmitate (C16:0), and lower activity with C18:0 and C6:0 lysophosphatidic acid. In Mus musculus (Mouse), this protein is Lysophosphatidic acid phosphatase type 6 (Acp6).